The sequence spans 286 residues: Light-independent protochlorophyllide reductase iron-sulfur ATP-binding protein (286 aa).

Residues 10–15 and lysine 39 contribute to the ATP site; that span reads GIGKST. Residue serine 14 participates in Mg(2+) binding. 2 residues coordinate [4Fe-4S] cluster: cysteine 95 and cysteine 129. An ATP-binding site is contributed by 180 to 181; the sequence is NR.

Belongs to the NifH/BchL/ChlL family. As to quaternary structure, homodimer. Protochlorophyllide reductase is composed of three subunits; ChlL, ChlN and ChlB. The cofactor is [4Fe-4S] cluster.

It catalyses the reaction chlorophyllide a + oxidized 2[4Fe-4S]-[ferredoxin] + 2 ADP + 2 phosphate = protochlorophyllide a + reduced 2[4Fe-4S]-[ferredoxin] + 2 ATP + 2 H2O. It participates in porphyrin-containing compound metabolism; chlorophyll biosynthesis (light-independent). In terms of biological role, component of the dark-operative protochlorophyllide reductase (DPOR) that uses Mg-ATP and reduced ferredoxin to reduce ring D of protochlorophyllide (Pchlide) to form chlorophyllide a (Chlide). This reaction is light-independent. The L component serves as a unique electron donor to the NB-component of the complex, and binds Mg-ATP. The chain is Light-independent protochlorophyllide reductase iron-sulfur ATP-binding protein from Synechococcus elongatus (strain ATCC 33912 / PCC 7942 / FACHB-805) (Anacystis nidulans R2).